We begin with the raw amino-acid sequence, 151 residues long: Ribosome maturation factor RimP (151 aa).

The protein belongs to the RimP family.

The protein localises to the cytoplasm. Required for maturation of 30S ribosomal subunits. This is Ribosome maturation factor RimP from Desulfotalea psychrophila (strain LSv54 / DSM 12343).